The sequence spans 647 residues: 1-phosphatidylinositol 4,5-bisphosphate phosphodiesterase zeta-1 (647 aa).

Positions 43–78 (CHFAHVKHIFKENDRQNQGRITIEEFRAIYRCIVHR) constitute an EF-hand domain. The PI-PLC X-box domain maps to 163 to 307 (QDMNHPLSDY…LKFKILVKNR (145 aa)). Catalysis depends on residues His178 and His223. Residues 386–502 (LSDLVIYTKA…GYILKPDILR (117 aa)) form the PI-PLC Y-box domain. Residues 502–627 (RDTTLGFNPN…KGYRRVPLFS (126 aa)) form the C2 domain.

In terms of assembly, interacts via its C2 domain with PtdIns(3)P and, to a lesser extent, PtdIns(5)P in vitro. Ca(2+) is required as a cofactor. Highly expressed in postpuberal testis, where expression is sperm cell-specific. Also expressed in brain of both sexes.

The protein resides in the nucleus. Its subcellular location is the cytoplasm. It is found in the perinuclear region. The enzyme catalyses a 1,2-diacyl-sn-glycero-3-phospho-(1D-myo-inositol-4,5-bisphosphate) + H2O = 1D-myo-inositol 1,4,5-trisphosphate + a 1,2-diacyl-sn-glycerol + H(+). In terms of biological role, the production of the second messenger molecules diacylglycerol (DAG) and inositol 1,4,5-trisphosphate (IP3) is mediated by activated phosphatidylinositol-specific phospholipase C enzymes. In vitro, hydrolyzes PtdIns(4,5)P2 in a Ca(2+)-dependent manner. Triggers intracellular Ca(2+) oscillations in oocytes solely during M phase and is involved in inducing oocyte activation and initiating embryonic development up to the blastocyst stage. Is therefore a strong candidate for the egg-activating soluble sperm factor that is transferred from the sperm into the egg cytoplasm following gamete membrane fusion. May exert an inhibitory effect on phospholipase-C-coupled processes that depend on calcium ions and protein kinase C, including CFTR trafficking and function. The protein is 1-phosphatidylinositol 4,5-bisphosphate phosphodiesterase zeta-1 of Mus musculus (Mouse).